Consider the following 103-residue polypeptide: UPF0298 protein LACR_0404 (103 aa).

It belongs to the UPF0298 family.

It localises to the cytoplasm. The polypeptide is UPF0298 protein LACR_0404 (Lactococcus lactis subsp. cremoris (strain SK11)).